Reading from the N-terminus, the 616-residue chain is Protein decapentaplegic (616 aa).

Residues 1–23 form the signal peptide; that stretch reads MRAWILLLAVLATSQPIVQVAST. The propeptide occupies 24 to 474; that stretch reads EDTSISQRFI…DGRHKARSIR (451 aa). A disordered region spans residues 80 to 188; sequence SDSDSDNNNN…TSTESHQSPI (109 aa). Low complexity predominate over residues 86–105; sequence NNNNNYKNRNNNNNNLNKGP. Basic residues predominate over residues 106-115; it reads RNNKNKGNKH. Positions 116–139 are enriched in basic and acidic residues; it reads SKSDANRQFNEVHKPRTDQLENSK. N-linked (GlcNAc...) asparagine glycosylation is present at N147. The segment covering 173–188 has biased composition (polar residues); the sequence is ATTTALTSTESHQSPI. Residues N360 and N395 are each glycosylated (N-linked (GlcNAc...) asparagine). Positions 470-512 are disordered; it reads ARSIRDVSGGGGGGGGAGEGGKGNGGGRNRRHQRRPARRKNHE. Residues 477–496 are compositionally biased toward gly residues; it reads SGGGGGGGGAGEGGKGNGGG. Residues 497 to 509 are compositionally biased toward basic residues; it reads RNRRHQRRPARRK. Cystine bridges form between C515–C581, C544–C613, and C548–C615. A glycan (N-linked (GlcNAc...) asparagine) is linked at N557.

Belongs to the TGF-beta family. As to quaternary structure, heterodimers of scw/dpp are the active subunit, dpp/dpp homodimers elicit a basal response and scw/scw homodimers alone are ineffective in specifying a dorsal pattern. Expressed in the imaginal discs associated with establishment of the proximal-distal axis of the appendages, and midgut mesoderm.

Its subcellular location is the secreted. Functionally, acts as an extracellular morphogen to establish at least two cellular response thresholds within the dorsal half of the drosophila embryo. Required for the proper development of the embryonic dorsal hypoderm, for viability of larvae and for cell viability of the epithelial cells in the imaginal disks. Acts together with scw. In Drosophila pseudoobscura pseudoobscura (Fruit fly), this protein is Protein decapentaplegic (dpp).